The chain runs to 203 residues: Outer-membrane lipoprotein carrier protein (203 aa).

Positions 1–20 are cleaved as a signal peptide; sequence MKKWLAISCLIAGMTSTAVY.

This sequence belongs to the LolA family. Monomer.

It localises to the periplasm. Its function is as follows. Participates in the translocation of lipoproteins from the inner membrane to the outer membrane. Only forms a complex with a lipoprotein if the residue after the N-terminal Cys is not an aspartate (The Asp acts as a targeting signal to indicate that the lipoprotein should stay in the inner membrane). This is Outer-membrane lipoprotein carrier protein from Pectobacterium carotovorum subsp. carotovorum (strain PC1).